Here is a 442-residue protein sequence, read N- to C-terminus: Endothelin receptor type B (442 aa).

The N-terminal stretch at 1–26 (MQPPPSLCGRALVALVLACGLSRIWG) is a signal peptide. At 27 to 101 (EERGFPPDRA…GPIEIKETFK (75 aa)) the chain is on the extracellular side. A glycan (N-linked (GlcNAc...) asparagine) is linked at N59. Residues 69-88 (AEVPKGDRTAGSPPRTISPP) are disordered. Residues 102–126 (YINTVVSCLVFVLGIIGNSTLLRII) form a helical membrane-spanning segment. Residues 127–137 (YKNKCMRNGPN) are Cytoplasmic-facing. Residues 138-163 (ILIASLALGDLLHIVIDIPINVYKLL) form a helical membrane-spanning segment. The Extracellular portion of the chain corresponds to 164–175 (AEDWPFGAEMCK). Cysteines 174 and 255 form a disulfide. A helical transmembrane segment spans residues 176–197 (LVPFIQKASVGITVLSLCALSI). The Cytoplasmic segment spans residues 198–218 (DRYRAVASWSRIKGIGVPKWT). The chain crosses the membrane as a helical span at residues 219 to 243 (AVEIVLIWVVSVVLAVPEAIGFDII). Residues 244-271 (TMDYKGSYLRICLLHPVQKTAFMQFYKT) lie on the Extracellular side of the membrane. A helical membrane pass occupies residues 272-296 (AKDWWLFSFYFCLPLAITAFFYTLM). The Cytoplasmic segment spans residues 297–324 (TCEMLRKKSGMQIALNDHLKQRREVAKT). S305 is subject to Phosphoserine. A helical transmembrane segment spans residues 325–350 (VFCLVLVFALCWLPLHLSRILKLTLY). The Extracellular portion of the chain corresponds to 351–362 (NQNDPNRCELLS). The chain crosses the membrane as a helical span at residues 363-389 (FLLVLDYIGINMASLNSCINPIALYLV). Topologically, residues 390–442 (SKRFKNCFKSCLCCWCQSFEEKQSLEEKQSCLKFKANDHGYDNFRSSNKYSSS) are cytoplasmic. Residues C402, C403, and C405 are each lipidated (S-palmitoyl cysteine). The residue at position 419 (S419) is a Phosphoserine. At Y439 the chain carries Phosphotyrosine. Phosphoserine is present on residues S440, S441, and S442.

Belongs to the G-protein coupled receptor 1 family. Endothelin receptor subfamily. EDNRB sub-subfamily. Palmitoylation of Cys-402 was confirmed by the palmitoylation of Cys-402 in a deletion mutant lacking both Cys-403 and Cys-405. Expressed in placental stem villi vessels, but not in cultured placental villi smooth muscle cells.

Its subcellular location is the cell membrane. In terms of biological role, non-specific receptor for endothelin 1, 2, and 3. Mediates its action by association with G proteins that activate a phosphatidylinositol-calcium second messenger system. This chain is Endothelin receptor type B, found in Homo sapiens (Human).